The following is an 833-amino-acid chain: Leucine--tRNA ligase (833 aa).

A 'HIGH' region motif is present at residues 41 to 52; it reads PYPSGAGLHVGH. The short motif at 610–614 is the 'KMSKS' region element; that stretch reads KMSKS. Residue Lys613 participates in ATP binding.

The protein belongs to the class-I aminoacyl-tRNA synthetase family.

It is found in the cytoplasm. The enzyme catalyses tRNA(Leu) + L-leucine + ATP = L-leucyl-tRNA(Leu) + AMP + diphosphate. This chain is Leucine--tRNA ligase, found in Streptococcus pneumoniae (strain 70585).